Consider the following 598-residue polypeptide: Eukaryotic translation initiation factor 3 subunit D (598 aa).

Residues 104-178 (VKTRGFGRGG…YDKPQRNRDS (75 aa)) are disordered. Residues 109–132 (FGRGGGTIFRGRGQRGGAQRGRGG) are compositionally biased toward gly residues. Over residues 165–177 (GWKDYDKPQRNRD) the composition is skewed to basic and acidic residues. Positions 304–318 (SIDLVTVNENAADAP) are RNA gate. A disordered region spans residues 574–598 (NTFEEEDDTGAKAEKDEESEEKDEE). The segment covering 589 to 598 (DEESEEKDEE) has biased composition (acidic residues).

Belongs to the eIF-3 subunit D family. Component of the eukaryotic translation initiation factor 3 (eIF-3) complex.

The protein localises to the cytoplasm. MRNA cap-binding component of the eukaryotic translation initiation factor 3 (eIF-3) complex, which is involved in protein synthesis of a specialized repertoire of mRNAs and, together with other initiation factors, stimulates binding of mRNA and methionyl-tRNAi to the 40S ribosome. The eIF-3 complex specifically targets and initiates translation of a subset of mRNAs involved in cell proliferation. In the eIF-3 complex, eif3d specifically recognizes and binds the 7-methylguanosine cap of a subset of mRNAs. In Coccidioides immitis (strain RS) (Valley fever fungus), this protein is Eukaryotic translation initiation factor 3 subunit D.